The sequence spans 213 residues: Adenylate kinase (213 aa).

An ATP-binding site is contributed by glycine 10–threonine 15. An NMP region spans residues serine 30–valine 59. Residues threonine 31, arginine 36, asparagine 57 to valine 59, glycine 85 to arginine 88, and glutamine 92 each bind AMP. Residues glycine 122 to aspartate 159 form an LID region. ATP is bound by residues arginine 123 and isoleucine 132–tyrosine 133. AMP is bound by residues arginine 156 and arginine 167. Cysteine 199 serves as a coordination point for ATP.

This sequence belongs to the adenylate kinase family. As to quaternary structure, monomer.

It localises to the cytoplasm. The enzyme catalyses AMP + ATP = 2 ADP. The protein operates within purine metabolism; AMP biosynthesis via salvage pathway; AMP from ADP: step 1/1. Its function is as follows. Catalyzes the reversible transfer of the terminal phosphate group between ATP and AMP. Plays an important role in cellular energy homeostasis and in adenine nucleotide metabolism. The chain is Adenylate kinase from Baumannia cicadellinicola subsp. Homalodisca coagulata.